Consider the following 171-residue polypeptide: Transcription antitermination protein NusB (171 aa).

Belongs to the NusB family.

Functionally, involved in transcription antitermination. Required for transcription of ribosomal RNA (rRNA) genes. Binds specifically to the boxA antiterminator sequence of the ribosomal RNA (rrn) operons. This is Transcription antitermination protein NusB from Brucella melitensis biotype 1 (strain ATCC 23456 / CCUG 17765 / NCTC 10094 / 16M).